The primary structure comprises 370 residues: Glucan endo-1,3-beta-glucosidase, basic vacuolar isoform GLB (370 aa).

An N-terminal signal peptide occupies residues 1 to 32 (MSTSDKHNTPQMAAITLLGLLLVASTIEIAGA). Residue Gln33 is modified to Pyrrolidone carboxylic acid. Glu128 (proton donor) is an active-site residue. Glu273 acts as the Nucleophile in catalysis. Residues 349-370 (VSGGVWDSSVETNATASLISEM) constitute a propeptide, removed in mature form. N-linked (GlcNAc...) asparagine glycosylation is present at Asn361.

This sequence belongs to the glycosyl hydrolase 17 family. In terms of tissue distribution, is expressed primarily in epidermal cell of healthy plant, and following induction by ethylene, accumulates in mesophyll cells.

The protein resides in the vacuole. It catalyses the reaction Hydrolysis of (1-&gt;3)-beta-D-glucosidic linkages in (1-&gt;3)-beta-D-glucans.. Its function is as follows. Implicated in the defense of plants against pathogens. In Nicotiana tabacum (Common tobacco), this protein is Glucan endo-1,3-beta-glucosidase, basic vacuolar isoform GLB.